A 208-amino-acid polypeptide reads, in one-letter code: Guanylate kinase (208 aa).

One can recognise a Guanylate kinase-like domain in the interval 4 to 182 (GQLYIISAPS…ALEELKSVFR (179 aa)). 11-18 (APSGAGKT) provides a ligand contact to ATP.

It belongs to the guanylate kinase family.

It is found in the cytoplasm. The enzyme catalyses GMP + ATP = GDP + ADP. In terms of biological role, essential for recycling GMP and indirectly, cGMP. The chain is Guanylate kinase from Hahella chejuensis (strain KCTC 2396).